The following is a 320-amino-acid chain: Cyclin-D6-1 (320 aa).

The segment at 279-320 is disordered; sequence HHRSASSESERTTTVGSAANSADAKRRCMGPPRQWGVGGPDE.

The protein belongs to the cyclin family. Cyclin D subfamily.

This Oryza sativa subsp. japonica (Rice) protein is Cyclin-D6-1 (CYCD6-1).